The primary structure comprises 281 residues: Lectin CaBo (281 aa).

Residues 1–29 (MAISKKSSLYLPIFTFITMLLMVVNKVSS) form the signal peptide. Asp-119 provides a ligand contact to Ca(2+). Arg-139 is a binding site for a carbohydrate. A propeptide spans 149–163 (IIKNSTTIDFNAAYN) (removed in mature form). The Mn(2+) site is built by Glu-171 and Asp-173. Ca(2+) is bound by residues Asp-173, Tyr-175, Asn-177, and Asp-182. Tyr-175 is a binding site for a carbohydrate. Residues Asp-182 and His-187 each coordinate Mn(2+). 262-263 (LY) contacts a carbohydrate.

Belongs to the leguminous lectin family. Equilibrium between homodimer and homotetramer. Post-translationally, the mature chain consists of residues 164-281 followed by residues 30-148. Concanavalin A-like lectins of the Diocleinae subtribe undergo proteolytic processing referred to as circular permutation. The propeptide is split into an N-terminal and a C-terminal part, the gamma and beta chain, respectively. These are then religated in beta-gamma order to form the mature alpha chain. The beta and gamma chains can often be detected in cell extracts.

D-mannose-specific lectin. The chain is Lectin CaBo from Canavalia bonariensis.